Reading from the N-terminus, the 539-residue chain is Lipid scramblase CLPTM1L (539 aa).

Topologically, residues 1–10 (MWSGRSSFTS) are cytoplasmic. The chain crosses the membrane as a helical span at residues 11–31 (LVVGVFLVYVVHTCWVMYGIV). Residues 32-285 (YTRPCSGDSN…LKGIFVDTNL (254 aa)) lie on the Extracellular side of the membrane. N-linked (GlcNAc...) asparagine glycosylation is found at asparagine 91 and asparagine 101. A helical transmembrane segment spans residues 286 to 306 (YLLALTFFVAAFHLLFDFLAF). Over 307–325 (KSDISFWKKKKSMIGMSTK) the chain is Cytoplasmic. The helical transmembrane segment at 326–342 (AVLWRCFSTVVIFLFLL) threads the bilayer. Residues 343–403 (DEQTSLLVLI…TEKYDAQAMK (61 aa)) lie on the Extracellular side of the membrane. Residues 404-424 (YLSYLLYPLCVGGAVYSLLNI) traverse the membrane as a helical segment. The Cytoplasmic portion of the chain corresponds to 425–429 (KYKSW). A helical transmembrane segment spans residues 430 to 450 (YSWLINSFVNGVYAFGFLFML). Topologically, residues 451 to 539 (PQLFVNYKMK…EQPKRKPHPD (89 aa)) are extracellular.

It belongs to the CLPTM1 family.

It localises to the endoplasmic reticulum membrane. The enzyme catalyses a 6-(alpha-D-glucosaminyl)-1-(1,2-diacyl-sn-glycero-3-phospho)-1D-myo-inositol(in) = a 6-(alpha-D-glucosaminyl)-1-(1,2-diacyl-sn-glycero-3-phospho)-1D-myo-inositol(out). It catalyses the reaction 6-(alpha-D-glucosaminyl)-(1-octadecanoyl,2-(9Z)-octadecenoyl-sn-glycero-3-phospho)-1D-myo-inositol(in) = 6-(alpha-D-glucosaminyl)-(1-octadecanoyl,2-(9Z)-octadecenoyl-sn-glycero-3-phospho)-1D-myo-inositol(out). It carries out the reaction a 1,2-diacyl-sn-glycero-3-phospho-(1D-myo-inositol)(in) = a 1,2-diacyl-sn-glycero-3-phospho-(1D-myo-inositol)(out). The catalysed reaction is a 1,2-diacyl-sn-glycero-3-phosphocholine(in) = a 1,2-diacyl-sn-glycero-3-phosphocholine(out). The enzyme catalyses a 1,2-diacyl-sn-glycero-3-phosphoethanolamine(in) = a 1,2-diacyl-sn-glycero-3-phosphoethanolamine(out). Scramblase that mediates the translocation of glucosaminylphosphatidylinositol (alpha-D-GlcN-(1-6)-(1,2-diacyl-sn-glycero-3-phospho)-1D-myo-inositol, GlcN-PI) across the endoplasmic reticulum (ER) membrane, from the cytosolic leaflet to the luminal leaflet of the ER membrane, where it participates in the biosynthesis of glycosylphosphatidylinositol (GPI). GPI is a lipid glycoconjugate involved in post-translational modification of proteins. Can also translocate 1,2-diacyl-sn-glycero-3-phospho-(1D-myo-inositol) (phosphatidylinositol or PI), as well as several other phospholipids (1,2-diacyl-sn-glycero-3-phosphocholine, 1,2-diacyl-sn-glycero-3-phosphoethanolamine), and N-acetylglucosaminylphosphatidylinositol (GlcNAc-PI) in vitro. The polypeptide is Lipid scramblase CLPTM1L (Clptm1l) (Mus musculus (Mouse)).